The primary structure comprises 109 residues: DNA-binding protein Mpal_0536 (109 aa).

The disordered stretch occupies residues 14-35; the sequence is MAQLQSQQMDQQQMDEEKQRAK. Low complexity predominate over residues 16-25; it reads QLQSQQMDQQ.

It belongs to the PDCD5 family.

This is DNA-binding protein Mpal_0536 from Methanosphaerula palustris (strain ATCC BAA-1556 / DSM 19958 / E1-9c).